A 402-amino-acid polypeptide reads, in one-letter code: NADH-quinone oxidoreductase subunit D (402 aa).

Belongs to the complex I 49 kDa subunit family. In terms of assembly, NDH-1 is composed of 14 different subunits. Subunits NuoB, C, D, E, F, and G constitute the peripheral sector of the complex.

The protein resides in the cell inner membrane. It carries out the reaction a quinone + NADH + 5 H(+)(in) = a quinol + NAD(+) + 4 H(+)(out). NDH-1 shuttles electrons from NADH, via FMN and iron-sulfur (Fe-S) centers, to quinones in the respiratory chain. The immediate electron acceptor for the enzyme in this species is believed to be ubiquinone. Couples the redox reaction to proton translocation (for every two electrons transferred, four hydrogen ions are translocated across the cytoplasmic membrane), and thus conserves the redox energy in a proton gradient. This is NADH-quinone oxidoreductase subunit D from Protochlamydia amoebophila (strain UWE25).